Reading from the N-terminus, the 90-residue chain is Probable Fe(2+)-trafficking protein (90 aa).

It belongs to the Fe(2+)-trafficking protein family.

Could be a mediator in iron transactions between iron acquisition and iron-requiring processes, such as synthesis and/or repair of Fe-S clusters in biosynthetic enzymes. This is Probable Fe(2+)-trafficking protein from Chromohalobacter salexigens (strain ATCC BAA-138 / DSM 3043 / CIP 106854 / NCIMB 13768 / 1H11).